We begin with the raw amino-acid sequence, 271 residues long: Zinc-finger homeodomain protein 8 (271 aa).

At serine 16 the chain carries Phosphoserine. Residues 56–107 form a ZF-HD dimerization-type; degenerate zinc finger; that stretch reads YKECLKNHAAGIGGHALDGCGEFMPSPSFNSNDPASLTCAACGCHRNFHRRE. The segment at 125–154 is disordered; that stretch reads HNRHQLPPPPPPHLAGIRSPDDDDSASPPP. The segment at residues 179-242 is a DNA-binding region (homeobox); it reads RKRFRTKFSQ…NNKISGRSGA (64 aa).

As to quaternary structure, homo- and heterodimer with other ZFHD proteins. Interacts with MIF1, MIF2 and MIF3; these interactions prevent nuclear localization and DNA-binding to inhibit transcription regulation activity. Binds to ZHD1, ZHD2, ZHD4, ZHD10 and ZHD11. Interacts with HIPP30. In terms of tissue distribution, mostly expressed in flowers and inflorescence.

The protein resides in the nucleus. Its function is as follows. Putative transcription factor. This Arabidopsis thaliana (Mouse-ear cress) protein is Zinc-finger homeodomain protein 8 (ZHD8).